We begin with the raw amino-acid sequence, 169 residues long: ALK and LTK ligand 2a (169 aa).

The N-terminal stretch at 1 to 25 (MRALRAPVLVMGLVLLICTAAQSDA) is a signal peptide. Positions 45-68 (ENSADDESAQKTESAPEPKDTHHL) are disordered. A compositionally biased stretch (basic and acidic residues) spans 52–67 (SAQKTESAPEPKDTHH). Disulfide bonds link Cys-130/Cys-166 and Cys-144/Cys-153.

This sequence belongs to the ALKAL family. As to quaternary structure, homodimer. As to expression, expressed at high level in the notochord and iridophore stripes of the trunk, as well as in the eye and swim bladder.

The protein localises to the secreted. It is found in the cell membrane. Cytokine that acts as a physiological ligand for receptor tyrosine kinases LTK and ALK. Required for neural crest cell differentiation and iridophore development during embryonic iridophore development and adult stripe development by acting as a receptor for LTK. The chain is ALK and LTK ligand 2a from Danio rerio (Zebrafish).